The chain runs to 175 residues: Nucleoside triphosphate/diphosphate phosphatase (175 aa).

The active-site Proton donor is Arg23. Mg(2+) is bound by residues Asn87, Asp103, Asp105, Asp107, Asp120, and Glu123.

It belongs to the Ntdp family. The cofactor is Mg(2+).

The enzyme catalyses a ribonucleoside 5'-triphosphate + H2O = a ribonucleoside 5'-diphosphate + phosphate + H(+). The catalysed reaction is a ribonucleoside 5'-diphosphate + H2O = a ribonucleoside 5'-phosphate + phosphate + H(+). Its function is as follows. Has nucleoside phosphatase activity towards nucleoside triphosphates and nucleoside diphosphates. In Halalkalibacterium halodurans (strain ATCC BAA-125 / DSM 18197 / FERM 7344 / JCM 9153 / C-125) (Bacillus halodurans), this protein is Nucleoside triphosphate/diphosphate phosphatase.